Consider the following 335-residue polypeptide: Probable UDP-N-acetylglucosamine pyrophosphorylase (335 aa).

The Substrate binding signature appears at 45-48 (LSGG). UTP contacts are provided by residues 45 to 48 (LSGG), Lys59, Gln120, and Gly145. Substrate is bound at residue Asn146. UTP is bound at residue Asp170. The Substrate binding signature appears at 218–219 (EY). Lys278 lines the UTP pocket. Lys308 is a binding site for substrate.

It belongs to the UDPGP type 1 family.

The protein resides in the cytoplasm. It catalyses the reaction N-acetyl-alpha-D-glucosamine 1-phosphate + UTP + H(+) = UDP-N-acetyl-alpha-D-glucosamine + diphosphate. The protein operates within nucleotide-sugar biosynthesis; UDP-N-acetyl-alpha-D-glucosamine biosynthesis; UDP-N-acetyl-alpha-D-glucosamine from N-acetyl-alpha-D-glucosamine 1-phosphate: step 1/1. This is Probable UDP-N-acetylglucosamine pyrophosphorylase (UAP1) from Encephalitozoon cuniculi (strain GB-M1) (Microsporidian parasite).